Here is a 618-residue protein sequence, read N- to C-terminus: Elongation factor 4 (618 aa).

One can recognise a tr-type G domain in the interval alanine 17–glutamate 198. GTP contacts are provided by residues aspartate 29 to threonine 34 and asparagine 145 to aspartate 148.

This sequence belongs to the TRAFAC class translation factor GTPase superfamily. Classic translation factor GTPase family. LepA subfamily.

The protein resides in the cell membrane. It carries out the reaction GTP + H2O = GDP + phosphate + H(+). In terms of biological role, required for accurate and efficient protein synthesis under certain stress conditions. May act as a fidelity factor of the translation reaction, by catalyzing a one-codon backward translocation of tRNAs on improperly translocated ribosomes. Back-translocation proceeds from a post-translocation (POST) complex to a pre-translocation (PRE) complex, thus giving elongation factor G a second chance to translocate the tRNAs correctly. Binds to ribosomes in a GTP-dependent manner. The chain is Elongation factor 4 from Pseudarthrobacter chlorophenolicus (strain ATCC 700700 / DSM 12829 / CIP 107037 / JCM 12360 / KCTC 9906 / NCIMB 13794 / A6) (Arthrobacter chlorophenolicus).